The chain runs to 311 residues: Protein translocase subunit SecF (311 aa).

The next 6 helical transmembrane spans lie at A19–L39, M142–L162, L166–L186, L192–V212, I245–I265, and L272–L292.

The protein belongs to the SecD/SecF family. SecF subfamily. In terms of assembly, forms a complex with SecD. Part of the essential Sec protein translocation apparatus which comprises SecA, SecYEG and auxiliary proteins SecDF-YajC and YidC.

It localises to the cell inner membrane. In terms of biological role, part of the Sec protein translocase complex. Interacts with the SecYEG preprotein conducting channel. SecDF uses the proton motive force (PMF) to complete protein translocation after the ATP-dependent function of SecA. This is Protein translocase subunit SecF from Magnetococcus marinus (strain ATCC BAA-1437 / JCM 17883 / MC-1).